Here is a 493-residue protein sequence, read N- to C-terminus: Glycerol kinase (493 aa).

Position 13 (Thr-13) interacts with ADP. The ATP site is built by Thr-13, Thr-14, and Ser-15. Thr-13 is a sn-glycerol 3-phosphate binding site. Position 17 (Arg-17) interacts with ADP. Arg-83, Glu-84, Tyr-135, and Asp-244 together coordinate sn-glycerol 3-phosphate. Glycerol is bound by residues Arg-83, Glu-84, Tyr-135, Asp-244, and Gln-245. Thr-266 and Gly-309 together coordinate ADP. Thr-266, Gly-309, Gln-313, and Gly-410 together coordinate ATP. ADP-binding residues include Gly-410 and Asn-414.

This sequence belongs to the FGGY kinase family.

The enzyme catalyses glycerol + ATP = sn-glycerol 3-phosphate + ADP + H(+). It functions in the pathway polyol metabolism; glycerol degradation via glycerol kinase pathway; sn-glycerol 3-phosphate from glycerol: step 1/1. With respect to regulation, inhibited by fructose 1,6-bisphosphate (FBP). Functionally, key enzyme in the regulation of glycerol uptake and metabolism. Catalyzes the phosphorylation of glycerol to yield sn-glycerol 3-phosphate. The protein is Glycerol kinase of Shewanella pealeana (strain ATCC 700345 / ANG-SQ1).